The sequence spans 360 residues: D-alanine--D-alanine ligase (360 aa).

In terms of domain architecture, ATP-grasp spans 146–352 (KLCAVQAGIH…FTELIDRLVR (207 aa)). Residue 179 to 234 (KKRFAPPFFVKPANLGSSVGIAKIHSFDELENALDEACRLDVKILVEKAIEGREVE) coordinates ATP. 3 residues coordinate Mg(2+): Asp-305, Glu-319, and Asn-321.

The protein belongs to the D-alanine--D-alanine ligase family. The cofactor is Mg(2+). Mn(2+) is required as a cofactor.

Its subcellular location is the cytoplasm. It catalyses the reaction 2 D-alanine + ATP = D-alanyl-D-alanine + ADP + phosphate + H(+). Its pathway is cell wall biogenesis; peptidoglycan biosynthesis. Functionally, cell wall formation. In Chlorobium phaeobacteroides (strain BS1), this protein is D-alanine--D-alanine ligase.